A 70-amino-acid chain; its full sequence is Brevinin-ALb (70 aa).

The first 22 residues, 1–22 (MFTLKKSLLLLFFLGTINLSLC), serve as a signal peptide directing secretion. A propeptide spanning residues 23-46 (EQERDADEEERRDDDEMDVEVEKR) is cleaved from the precursor. A disulfide bond links cysteine 64 and cysteine 70.

In terms of tissue distribution, expressed by the skin glands.

The protein resides in the secreted. Its function is as follows. Antimicrobial peptide with activity against Gram-positive and Gram-negative bacteria and against fungi. Has been tested against S.aureus (MIC=5.5 ug/mL), E.coli (MIC=6.5 ug/mL), B.dysenteriae (MIC=2.2 ug/mL), and C.albicans (MIC=7.5 ug/mL). Can regulate or mediate antimicrobial response by stimulating mast cell degranulation. Induces histamine release. Shows cytotoxicity toward solid tumor cell line HepG2. Also shows a potent hemolytic activity (LD(50)=5 ug/ml). The polypeptide is Brevinin-ALb (Amolops loloensis (Lolokou Sucker Frog)).